The chain runs to 117 residues: Ig heavy chain V region MOPC 104E (117 aa).

An Ig-like domain is found at 1-116 (EVQLQQSGPE…WGAGTTVTVS (116 aa)). Residues Cys-22 and Cys-96 are joined by a disulfide bond. Asn-55 carries N-linked (GlcNAc...) (high mannose) asparagine; atypical glycosylation.

This chain is Ig heavy chain V region MOPC 104E, found in Mus musculus (Mouse).